The sequence spans 105 residues: Antitoxin HigA-1 (105 aa).

The region spanning Leu15–Trp69 is the HTH cro/C1-type domain. A DNA-binding region (H-T-H motif) is located at residues Ser27 to Asn46.

Its function is as follows. Antitoxin component of a type II toxin-antitoxin (TA) system that counteracts the effect of the HigB-1 toxin. Binds to its own promoter and regulates transcription of the higB-1/higA-1 operon. This Vibrio cholerae serotype O1 (strain ATCC 39315 / El Tor Inaba N16961) protein is Antitoxin HigA-1 (higA-1).